We begin with the raw amino-acid sequence, 338 residues long: 4-hydroxy-3-methylbut-2-enyl diphosphate reductase (338 aa).

[4Fe-4S] cluster is bound at residue cysteine 21. Residues histidine 50 and histidine 83 each contribute to the (2E)-4-hydroxy-3-methylbut-2-enyl diphosphate site. 2 residues coordinate dimethylallyl diphosphate: histidine 50 and histidine 83. Isopentenyl diphosphate contacts are provided by histidine 50 and histidine 83. Cysteine 105 contributes to the [4Fe-4S] cluster binding site. Histidine 133 is a (2E)-4-hydroxy-3-methylbut-2-enyl diphosphate binding site. Histidine 133 is a binding site for dimethylallyl diphosphate. Isopentenyl diphosphate is bound at residue histidine 133. Glutamate 135 acts as the Proton donor in catalysis. A (2E)-4-hydroxy-3-methylbut-2-enyl diphosphate-binding site is contributed by threonine 173. Position 203 (cysteine 203) interacts with [4Fe-4S] cluster. Residues serine 231, serine 232, asparagine 233, and serine 276 each coordinate (2E)-4-hydroxy-3-methylbut-2-enyl diphosphate. The dimethylallyl diphosphate site is built by serine 231, serine 232, asparagine 233, and serine 276. The isopentenyl diphosphate site is built by serine 231, serine 232, asparagine 233, and serine 276.

It belongs to the IspH family. [4Fe-4S] cluster serves as cofactor.

It carries out the reaction isopentenyl diphosphate + 2 oxidized [2Fe-2S]-[ferredoxin] + H2O = (2E)-4-hydroxy-3-methylbut-2-enyl diphosphate + 2 reduced [2Fe-2S]-[ferredoxin] + 2 H(+). The enzyme catalyses dimethylallyl diphosphate + 2 oxidized [2Fe-2S]-[ferredoxin] + H2O = (2E)-4-hydroxy-3-methylbut-2-enyl diphosphate + 2 reduced [2Fe-2S]-[ferredoxin] + 2 H(+). It functions in the pathway isoprenoid biosynthesis; dimethylallyl diphosphate biosynthesis; dimethylallyl diphosphate from (2E)-4-hydroxy-3-methylbutenyl diphosphate: step 1/1. It participates in isoprenoid biosynthesis; isopentenyl diphosphate biosynthesis via DXP pathway; isopentenyl diphosphate from 1-deoxy-D-xylulose 5-phosphate: step 6/6. Catalyzes the conversion of 1-hydroxy-2-methyl-2-(E)-butenyl 4-diphosphate (HMBPP) into a mixture of isopentenyl diphosphate (IPP) and dimethylallyl diphosphate (DMAPP). Acts in the terminal step of the DOXP/MEP pathway for isoprenoid precursor biosynthesis. This is 4-hydroxy-3-methylbut-2-enyl diphosphate reductase from Streptomyces avermitilis (strain ATCC 31267 / DSM 46492 / JCM 5070 / NBRC 14893 / NCIMB 12804 / NRRL 8165 / MA-4680).